A 276-amino-acid chain; its full sequence is Large ribosomal subunit protein uL2 (276 aa).

The tract at residues 212–276 is disordered; sequence NRHRGIRPQT…KLIISRKKHK (65 aa). The span at 257–276 shows a compositional bias: basic residues; that stretch reads YKTRKKKASDKLIISRKKHK.

Belongs to the universal ribosomal protein uL2 family. As to quaternary structure, part of the 50S ribosomal subunit. Forms a bridge to the 30S subunit in the 70S ribosome.

Its function is as follows. One of the primary rRNA binding proteins. Required for association of the 30S and 50S subunits to form the 70S ribosome, for tRNA binding and peptide bond formation. It has been suggested to have peptidyltransferase activity; this is somewhat controversial. Makes several contacts with the 16S rRNA in the 70S ribosome. The sequence is that of Large ribosomal subunit protein uL2 from Helicobacter pylori (strain P12).